Consider the following 226-residue polypeptide: Protein YOP1 homolog (226 aa).

A disordered region spans residues 1-25 (MRMSKLYKNKEKENEKPSNEPPIKQ). Residues 1 to 72 (MRMSKLYKNK…IEFGYKLGIK (72 aa)) lie on the Cytoplasmic side of the membrane. The segment covering 8–18 (KNKEKENEKPS) has biased composition (basic and acidic residues). Residues 73–92 (PSYIVVFGGSALFISLVLGW) traverse the membrane as a helical segment. Residues 93-94 (GA) are Lumenal-facing. The chain crosses the membrane as a helical span at residues 95 to 113 (ALICNLVGFAYPAYQSFKA). The Cytoplasmic portion of the chain corresponds to 114–123 (VESQGHAETK). The helical transmembrane segment at 124-140 (LWLTYWVVFSLFFFIEY) threads the bilayer. Over 141 to 143 (LID) the chain is Lumenal. The helical transmembrane segment at 144–162 (IILFWIPFYYVIKLLFLLY) threads the bilayer. Residues 163 to 226 (LYMPQVRGAE…VQEGVRRRNV (64 aa)) lie on the Cytoplasmic side of the membrane.

It belongs to the DP1 family. In terms of assembly, may form oligomers.

It is found in the endoplasmic reticulum membrane. Functionally, required to generate and maintain the structure of the tubular endoplasmic reticulum network and the digestive (food) vacuole. Induces high curvature in membranes and causes membrane tubule formation. The sequence is that of Protein YOP1 homolog from Plasmodium berghei (strain Anka).